We begin with the raw amino-acid sequence, 271 residues long: ATP synthase subunit a (271 aa).

The next 5 membrane-spanning stretches (helical) occupy residues 40–60, 100–120, 146–166, 220–240, and 242–262; these read TINI…LVLF, LIAP…LMDL, DVNV…FYSI, LIFI…LNVP, and AIFH…LTIV.

Belongs to the ATPase A chain family. As to quaternary structure, F-type ATPases have 2 components, CF(1) - the catalytic core - and CF(0) - the membrane proton channel. CF(1) has five subunits: alpha(3), beta(3), gamma(1), delta(1), epsilon(1). CF(0) has three main subunits: a(1), b(2) and c(9-12). The alpha and beta chains form an alternating ring which encloses part of the gamma chain. CF(1) is attached to CF(0) by a central stalk formed by the gamma and epsilon chains, while a peripheral stalk is formed by the delta and b chains.

It localises to the cell inner membrane. Its function is as follows. Key component of the proton channel; it plays a direct role in the translocation of protons across the membrane. In Escherichia coli O8 (strain IAI1), this protein is ATP synthase subunit a.